Consider the following 196-residue polypeptide: Holliday junction branch migration complex subunit RuvA (196 aa).

A domain I region spans residues 1-62; it reads MYEYINGLIT…ENEMTLYGFI (62 aa). The domain II stretch occupies residues 63 to 141; the sequence is DENEKYLFNK…DLALSAGMTV (79 aa). The flexible linker stretch occupies residues 142-146; the sequence is ETVPT. A domain III region spans residues 147 to 196; that stretch reads TDNQALADALAALESLGYSAKDVAKLQTVLANQKDTTDGYIRSALKFLVK.

This sequence belongs to the RuvA family. Homotetramer. Forms an RuvA(8)-RuvB(12)-Holliday junction (HJ) complex. HJ DNA is sandwiched between 2 RuvA tetramers; dsDNA enters through RuvA and exits via RuvB. An RuvB hexamer assembles on each DNA strand where it exits the tetramer. Each RuvB hexamer is contacted by two RuvA subunits (via domain III) on 2 adjacent RuvB subunits; this complex drives branch migration. In the full resolvosome a probable DNA-RuvA(4)-RuvB(12)-RuvC(2) complex forms which resolves the HJ.

It is found in the cytoplasm. Its function is as follows. The RuvA-RuvB-RuvC complex processes Holliday junction (HJ) DNA during genetic recombination and DNA repair, while the RuvA-RuvB complex plays an important role in the rescue of blocked DNA replication forks via replication fork reversal (RFR). RuvA specifically binds to HJ cruciform DNA, conferring on it an open structure. The RuvB hexamer acts as an ATP-dependent pump, pulling dsDNA into and through the RuvAB complex. HJ branch migration allows RuvC to scan DNA until it finds its consensus sequence, where it cleaves and resolves the cruciform DNA. The polypeptide is Holliday junction branch migration complex subunit RuvA (Leuconostoc citreum (strain KM20)).